The sequence spans 901 residues: Probable inorganic carbon transporter subunit DabA (901 aa).

The Zn(2+) site is built by Cys-424, Asp-426, His-606, and Cys-621.

Belongs to the inorganic carbon transporter (TC 9.A.2) DabA family. In terms of assembly, forms a complex with DabB. Zn(2+) is required as a cofactor.

Its subcellular location is the cell membrane. Part of an energy-coupled inorganic carbon pump. This is Probable inorganic carbon transporter subunit DabA from Staphylococcus aureus (strain bovine RF122 / ET3-1).